Consider the following 333-residue polypeptide: CMP-N-acetylneuraminate-beta-galactosamide-alpha-2,3-sialyltransferase 4 (333 aa).

Residues 1–8 are Cytoplasmic-facing; that stretch reads MTSKSHWK. A helical; Signal-anchor for type II membrane protein membrane pass occupies residues 9 to 26; sequence LLALALVLVVVMVWYSIS. The Lumenal portion of the chain corresponds to 27 to 333; that stretch reads REDRYIEFFY…MGAVKNLTYF (307 aa). N-linked (GlcNAc...) asparagine glycosylation is found at Asn61, Asn131, Asn310, and Asn329. A disulfide bridge connects residues Cys120 and Cys273.

This sequence belongs to the glycosyltransferase 29 family. Broadly expressed among tissues with highest levels in the small intestine and colon.

The protein localises to the golgi apparatus. Its subcellular location is the golgi stack membrane. The enzyme catalyses a beta-D-galactosyl-(1-&gt;3)-N-acetyl-beta-D-galactosaminyl derivative + CMP-N-acetyl-beta-neuraminate = an N-acetyl-alpha-neuraminyl-(2-&gt;3)-beta-D-galactosyl-(1-&gt;3)-N-acetyl-beta-D-galactosaminyl derivative + CMP + H(+). It carries out the reaction a beta-D-galactosyl-(1-&gt;3)-N-acetyl-alpha-D-galactosaminyl derivative + CMP-N-acetyl-beta-neuraminate = an N-acetyl-alpha-neuraminyl-(2-&gt;3)-beta-D-galactosyl-(1-&gt;3)-N-acetyl-alpha-D-galactosaminyl derivative + CMP + H(+). The catalysed reaction is a beta-D-galactosyl-(1-&gt;4)-N-acetyl-beta-D-glucosaminyl derivative + CMP-N-acetyl-beta-neuraminate = an N-acetyl-alpha-neuraminyl-(2-&gt;3)-beta-D-galactosyl-(1-&gt;4)-N-acetyl-beta-D-glucosaminyl derivative + CMP + H(+). It catalyses the reaction a ganglioside GM1 (d18:1(4E)) + CMP-N-acetyl-beta-neuraminate = a ganglioside GD1a (d18:1(4E)) + CMP + H(+). The enzyme catalyses a ganglioside GA1 (d18:1(4E)) + CMP-N-acetyl-beta-neuraminate = a ganglioside GM1b (d18:1(4E)) + CMP + H(+). It carries out the reaction a ganglioside GT1c (d18:1(4E)) + CMP-N-acetyl-beta-neuraminate = a ganglioside GQ1c (d18:1(4E)) + CMP + H(+). The catalysed reaction is a neolactoside nLc4Cer + CMP-N-acetyl-beta-neuraminate = a neolactoside IV(3)-alpha-NeuAc-nLc4Cer + CMP + H(+). It catalyses the reaction a neolactoside nLc4Cer(d18:1(4E)) + CMP-N-acetyl-beta-neuraminate = a neolactoside IV(3)-alpha-NeuAc-nLc4Cer(d18:1(4E)) + CMP + H(+). It functions in the pathway protein modification; protein glycosylation. Functionally, a beta-galactoside alpha2-3 sialyltransferase involved in terminal sialylation of glycoproteins and glycolipids. Catalyzes the transfer of sialic acid (N-acetyl-neuraminic acid; Neu5Ac) from the nucleotide sugar donor CMP-Neu5Ac onto acceptor Galbeta-(1-&gt;3)-GalNAc- and Galbeta-(1-&gt;4)-GlcNAc-terminated glycoconjugates through an alpha2-3 linkage. Plays a major role in hemostasis. Responsible for sialylation of plasma VWF/von Willebrand factor, preventing its recognition by asialoglycoprotein receptors (ASGPR) and subsequent clearance. Regulates ASGPR-mediated clearance of platelets. Participates in the biosynthesis of the sialyl Lewis X epitopes, both on O- and N-glycans, which are recognized by SELE/E-selectin, SELP/P-selectin and SELL/L-selectin. Essential for selectin-mediated rolling and adhesion of leukocytes during extravasation. Contributes to adhesion and transendothelial migration of neutrophils likely through terminal sialylation of CXCR2. In glycosphingolipid biosynthesis, sialylates GM1 and GA1 gangliosides to form GD1a and GM1b, respectively. Metabolizes brain c-series ganglioside GT1c forming GQ1c. Synthesizes ganglioside LM1 (IV3Neu5Ac-nLc4Cer), a major structural component of peripheral nerve myelin. The protein is CMP-N-acetylneuraminate-beta-galactosamide-alpha-2,3-sialyltransferase 4 (St3gal4) of Mus musculus (Mouse).